Here is a 220-residue protein sequence, read N- to C-terminus: Ras-related protein Rab-3A (220 aa).

The GTP site is built by S31, S32, V33, G34, K35, T36, S37, T48, P49, S53, and T54. Residue T36 participates in Mg(2+) binding. Positions 49 to 58 match the Switch 1 motif; it reads PAFVSTVGID. T54 and D77 together coordinate Mg(2+). Residue G80 participates in GTP binding. Residues 80–96 carry the Switch 2 motif; sequence GQERYRTITTAYYRGAM. T86 is modified (phosphothreonine). Residues N135, K136, D138, A166, and K167 each coordinate GTP. S188 and S190 each carry phosphoserine. The interval 194-220 is disordered; sequence ADPAVTGAKQGPQLTDQQAPPHQDCAC. Residues C218 and C220 are each lipidated (S-geranylgeranyl cysteine). The residue at position 220 (C220) is a Cysteine methyl ester.

It belongs to the small GTPase superfamily. Rab family. In terms of assembly, interacts with RIMS1 and RIMS2. Interacts with Rabphilin-3A/RPH3A and Rab effector Noc2/RPH3AL. Interacts with SYTL4. Interacts with RAB3IP. Interacts with SGSM1 and SGSM3. Interacts with SYT1. Interacts with MYH9; this interaction is essential for lysosome exocytosis and plasma membrane repair. Interacts with STXBP1; this interaction promotes RAB3A dissociation from the vesicle membrane. Interacts with SNCA. Interacts with GDI1, GDI2, CHM and CHML; phosphorylation at Thr-86 disrupts these interactions. Interacts with MADD (via uDENN domain); the GTP-bound form is preferred for interaction. Mg(2+) is required as a cofactor. Phosphorylation of Thr-86 in the switch II region by LRRK2 prevents the association of RAB regulatory proteins, including CHM, CHML and RAB GDP dissociation inhibitors GDI1 and GDI2.

It localises to the cytoplasm. The protein localises to the cytosol. It is found in the lysosome. The protein resides in the cytoplasmic vesicle. Its subcellular location is the secretory vesicle. It localises to the cell projection. The protein localises to the axon. It is found in the cell membrane. The protein resides in the presynapse. Its subcellular location is the postsynapse. It carries out the reaction GTP + H2O = GDP + phosphate + H(+). With respect to regulation, regulated by guanine nucleotide exchange factors (GEFs) including RAB3IL1 and MADD which promote the exchange of bound GDP for free GTP. Regulated by GTPase activating proteins (GAPs) including RAB3GAP1 and TBC1D10B which increase the GTP hydrolysis activity. Inhibited by GDP dissociation inhibitors (GDIs) which prevent Rab-GDP dissociation. Functionally, the small GTPases Rab are key regulators of intracellular membrane trafficking, from the formation of transport vesicles to their fusion with membranes. Rabs cycle between an inactive GDP-bound form and an active GTP-bound form that is able to recruit to membranes different sets of downstream effectors directly responsible for vesicle formation, movement, tethering and fusion. RAB3A plays a central role in regulated exocytosis and secretion. Controls the recruitment, tethering and docking of secretory vesicles to the plasma membrane. Upon stimulation, switches to its active GTP-bound form, cycles to vesicles and recruits effectors such as RIMS1, RIMS2, Rabphilin-3A/RPH3A, RPH3AL or SYTL4 to help the docking of vesicules onto the plasma membrane. Upon GTP hydrolysis by GTPase-activating protein, dissociates from the vesicle membrane allowing the exocytosis to proceed. Stimulates insulin secretion through interaction with RIMS2 or RPH3AL effectors in pancreatic beta cells. Regulates calcium-dependent lysosome exocytosis and plasma membrane repair (PMR) via the interaction with 2 effectors, SYTL4 and myosin-9/MYH9. Acts as a positive regulator of acrosome content secretion in sperm cells by interacting with RIMS1. Also plays a role in the regulation of dopamine release by interacting with synaptotagmin I/SYT. In Sus scrofa (Pig), this protein is Ras-related protein Rab-3A (RAB3A).